Consider the following 277-residue polypeptide: Cell division protein ZipA (277 aa).

At 1–5 the chain is on the periplasmic side; that stretch reads MQDLR. Residues 6–26 traverse the membrane as a helical segment; it reads LMLLLFGVITIIVLFLHGVWA. At 27–277 the chain is on the cytoplasmic side; that stretch reads RRKERSALFY…NALIRSTPHL (251 aa). A disordered region spans residues 120 to 139; the sequence is QKKSDDLSHQSKETHHPSIQ.

The protein belongs to the ZipA family. As to quaternary structure, interacts with FtsZ via their C-terminal domains.

It localises to the cell inner membrane. Its function is as follows. Essential cell division protein that stabilizes the FtsZ protofilaments by cross-linking them and that serves as a cytoplasmic membrane anchor for the Z ring. Also required for the recruitment to the septal ring of downstream cell division proteins. This Hamiltonella defensa subsp. Acyrthosiphon pisum (strain 5AT) protein is Cell division protein ZipA.